The primary structure comprises 113 residues: Large ribosomal subunit protein uL22 (113 aa).

It belongs to the universal ribosomal protein uL22 family. In terms of assembly, part of the 50S ribosomal subunit.

Its function is as follows. This protein binds specifically to 23S rRNA; its binding is stimulated by other ribosomal proteins, e.g. L4, L17, and L20. It is important during the early stages of 50S assembly. It makes multiple contacts with different domains of the 23S rRNA in the assembled 50S subunit and ribosome. The globular domain of the protein is located near the polypeptide exit tunnel on the outside of the subunit, while an extended beta-hairpin is found that lines the wall of the exit tunnel in the center of the 70S ribosome. In Roseiflexus castenholzii (strain DSM 13941 / HLO8), this protein is Large ribosomal subunit protein uL22.